Consider the following 217-residue polypeptide: Fucoxanthin-chlorophyll a-c binding protein B, chloroplastic (217 aa).

Residues 1–39 (MKSAVMAVACAAAPGFRGPSAFNGAALTTSAKACSAMKM) constitute a chloroplast transit peptide. 3 helical membrane-spanning segments follow: residues 81 to 101 (IAML…PGML), 122 to 142 (IPPA…LAVM), and 183 to 203 (GRAA…NNKP).

Belongs to the fucoxanthin chlorophyll protein family. The LHC complex of chromophytic algae is composed of fucoxanthin, chlorophyll A and C bound non-covalently by fucoxanthin chlorophyll proteins (FCPs). The ratio of pigments in this LHC is; fucoxanthin: chlorophyll C: chlorophyll A; (0.6-1): (0.1-0.3): (1).

Its subcellular location is the plastid. The protein localises to the chloroplast thylakoid membrane. Functionally, the light-harvesting complex (LHC) functions as a light receptor, it captures and delivers excitation energy to photosystems with which it is closely associated. Energy is transferred from the carotenoid and chlorophyll C (or B) to chlorophyll A and the photosynthetic reaction centers where it is used to synthesize ATP and reducing power. This is Fucoxanthin-chlorophyll a-c binding protein B, chloroplastic (FCPB) from Macrocystis pyrifera (Giant kelp).